The sequence spans 187 residues: Elongation factor P (187 aa).

This sequence belongs to the elongation factor P family.

Its subcellular location is the cytoplasm. The protein operates within protein biosynthesis; polypeptide chain elongation. Functionally, involved in peptide bond synthesis. Stimulates efficient translation and peptide-bond synthesis on native or reconstituted 70S ribosomes in vitro. Probably functions indirectly by altering the affinity of the ribosome for aminoacyl-tRNA, thus increasing their reactivity as acceptors for peptidyl transferase. The protein is Elongation factor P of Treponema denticola (strain ATCC 35405 / DSM 14222 / CIP 103919 / JCM 8153 / KCTC 15104).